A 232-amino-acid chain; its full sequence is Probable anion ABC transporter permease protein HVO_1887 (232 aa).

The 202-residue stretch at 16–217 (TAVSLYVSTA…ALVLGVNALG (202 aa)) folds into the ABC transmembrane type-1 domain. 5 helical membrane-spanning segments follow: residues 23–43 (STAAVALSAALGLPISLAVGF), 55–75 (VISTGMGFPSVVVGLVVLLVL), 93–113 (MILSQTILALPVLVSVSLSAV), 146–166 (IVTALLAAYGRAISEVGSVLI), and 198–218 (TGIALGAILLALVLGVNALGA).

Belongs to the binding-protein-dependent transport system permease family. The complex is composed of two ATP-binding proteins (HVO_1886), two transmembrane proteins (HVO_1887) and a solute-binding protein (HVO_1888).

The protein localises to the cell membrane. Its function is as follows. Part of an ABC transporter complex involved in anions import. Responsible for the translocation of the substrate across the membrane. The chain is Probable anion ABC transporter permease protein HVO_1887 from Haloferax volcanii (strain ATCC 29605 / DSM 3757 / JCM 8879 / NBRC 14742 / NCIMB 2012 / VKM B-1768 / DS2) (Halobacterium volcanii).